A 4011-amino-acid polypeptide reads, in one-letter code: Hybrid PKS-NRPS synthetase mycA (4011 aa).

Positions 12-451 (NEPIAIIGSA…GANAHVILEN (440 aa)) constitute a Ketosynthase family 3 (KS3) domain. Catalysis depends on for beta-ketoacyl synthase activity residues C185, H324, and H373. Residues 576–903 (VFTGQGAQWA…PYTGTLSRGS (328 aa)) form an acyl transferase (AT) domain region. The N-terminal hotdog fold stretch occupies residues 977–1113 (NPLLGRRIPD…GRVIVTLAGT (137 aa)). Residues 977-1290 (NPLLGRRIPD…ITPLATRTGQ (314 aa)) form the PKS/mFAS DH domain. Positions 978–1287 (PLLGRRIPDG…GVRITPLATR (310 aa)) are dehydratase (DH) domain. H1009 acts as the Proton acceptor; for dehydratase activity in catalysis. The interval 1135–1290 (TAEVREDEFY…ITPLATRTGQ (156 aa)) is C-terminal hotdog fold. D1195 acts as the Proton donor; for dehydratase activity in catalysis. The methyltransferase (MT) domain stretch occupies residues 1434–1626 (YYVEALGIRE…FSGIDTITPE (193 aa)). The segment at 2138–2311 (TYVLFGLTSD…AASVLHLGAV (174 aa)) is ketoreductase (KR)domain. The 76-residue stretch at 2429 to 2504 (DSFLQKLQIM…DLVAFAHEKL (76 aa)) folds into the Carrier 1 domain. S2464 bears the O-(pantetheine 4'-phosphoryl)serine mark. A disordered region spans residues 2519–2607 (AAAAAAAERS…PREQDVERTA (89 aa)). Residues 2559-2578 (PASSSTGSDHPTSVTSSGHT) show a composition bias toward polar residues. The condensation stretch occupies residues 2604–2975 (ERTAPMSLGQ…KPDSTLGSAP (372 aa)). Residues 3009 to 3414 (IIQRNPDTIA…GELEILGRID (406 aa)) are adenylation. The disordered stretch occupies residues 3525-3544 (AKEEEEEKRPNGSSAAPLTQ). The span at 3535–3544 (NGSSAAPLTQ) shows a compositional bias: polar residues. A Carrier 2 domain is found at 3541–3621 (PLTQQELQLR…AMAAAVHDAA (81 aa)). An O-(pantetheine 4'-phosphoryl)serine modification is found at S3581. Residues 3671-3978 (VVILTGATGF…RTVPLGQWIE (308 aa)) are reductase-like.

It in the C-terminal section; belongs to the NRP synthetase family.

The enzyme catalyses L-leucine + 8 malonyl-CoA + 4 S-adenosyl-L-methionine + ATP + 9 NADPH + 12 H(+) = (5S)-5-(2-methylpropyl)-3-[(2E,6R,8E,10E,12E)-6,8,10,12-tetramethyltetradeca-2,8,10,12-tetraenoyl]-2,5-dihydro-1H-pyrrol-2-one + AMP + 4 S-adenosyl-L-homocysteine + 8 CO2 + diphosphate + 9 NADP(+) + 8 CoA + 7 H2O. It functions in the pathway mycotoxin biosynthesis. Its function is as follows. Hybrid PKS-NRPS synthetase; part of the gene cluster that mediates the biosynthesis of myceliothermophins, mycotoxins that contain a trans-fused decalin ring system connected to a conjugated 3-pyrrolin-2-one moiety and that have potential anti-tumor properties. The polyketide synthase module (PKS) of the PKS-NRPS mycA is responsible for the synthesis of the octaketide backbone. The downstream nonribosomal peptide synthetase (NRPS) module then amidates the carboxyl end of the octaketide with a leucine. A reductase-like domain (R) at the C-terminus catalyzes the reductive release of the polyketide-amino acid intermediate. Because mycA lacks a designated enoylreductase (ER) domain, the required activity is provided the enoyl reductase mycC. Following mycA-catalyzed construction and release of aminoacyl polyketide aldehyde, Knoevenagel condensation yields the expected ketone. This C18 keto acyclic precursor is the substrate of the Diels-Alderase mycB, that catalyzes the Diels-Alder cycloaddition to produce myceliothermophin E. A yet unknown oxygenase involved in the production of myceliothermophin A, via substitution with a hydroxyl group at the C21, has still to be identified. This chain is Hybrid PKS-NRPS synthetase mycA, found in Thermothelomyces thermophilus (strain ATCC 42464 / BCRC 31852 / DSM 1799) (Sporotrichum thermophile).